The chain runs to 107 residues: Diuretic hormone 45 (107 aa).

A propeptide spanning residues 1 to 44 (LYAMSPMAARYSAGAPWLYLLADMPRDSQRLVDPADLHEGRARP) is cleaved from the precursor. Val-91 is subject to Valine amide.

As to expression, expressed in corpora cardiaca (CC), corpora allata (CA), antennal lobe (AL) and gnathal ganglion (GNG) (at protein level). Expression in AL and GNG detected in some animals, in CC and CA in few animals (at protein level).

The protein localises to the secreted. In terms of biological role, regulation of fluid secretion. The polypeptide is Diuretic hormone 45 (Agrotis ipsilon (Black cutworm moth)).